The following is a 433-amino-acid chain: 3-phosphoshikimate 1-carboxyvinyltransferase (433 aa).

3-phosphoshikimate is bound by residues lysine 23, serine 24, and arginine 28. Residue lysine 23 coordinates phosphoenolpyruvate. Positions 95 and 123 each coordinate phosphoenolpyruvate. 4 residues coordinate 3-phosphoshikimate: serine 167, glutamine 169, aspartate 317, and lysine 344. Glutamine 169 provides a ligand contact to phosphoenolpyruvate. Aspartate 317 serves as the catalytic Proton acceptor. Phosphoenolpyruvate contacts are provided by arginine 348 and arginine 390.

It belongs to the EPSP synthase family. In terms of assembly, monomer.

It localises to the cytoplasm. It catalyses the reaction 3-phosphoshikimate + phosphoenolpyruvate = 5-O-(1-carboxyvinyl)-3-phosphoshikimate + phosphate. The protein operates within metabolic intermediate biosynthesis; chorismate biosynthesis; chorismate from D-erythrose 4-phosphate and phosphoenolpyruvate: step 6/7. Functionally, catalyzes the transfer of the enolpyruvyl moiety of phosphoenolpyruvate (PEP) to the 5-hydroxyl of shikimate-3-phosphate (S3P) to produce enolpyruvyl shikimate-3-phosphate and inorganic phosphate. This chain is 3-phosphoshikimate 1-carboxyvinyltransferase, found in Staphylococcus epidermidis (strain ATCC 35984 / DSM 28319 / BCRC 17069 / CCUG 31568 / BM 3577 / RP62A).